The primary structure comprises 300 residues: uncharacterized protein (300 aa).

Residues 10–67 form the HTH lysR-type domain; it reads FDLNLLVIFECIYQHLSISKAAESLYITPSAVSQSLQRLRAQFNDPLFIRSGKGIAPT. A DNA-binding region (H-T-H motif) is located at residues 27 to 46; it reads ISKAAESLYITPSAVSQSLQ.

It belongs to the LysR transcriptional regulatory family.

This is an uncharacterized protein from Escherichia coli (strain K12).